A 278-amino-acid chain; its full sequence is Sulfur carrier protein FdhD (278 aa).

Residue C121 is the Cysteine persulfide intermediate of the active site. 260–265 (FCKPGR) contacts Mo-bis(molybdopterin guanine dinucleotide).

This sequence belongs to the FdhD family.

The protein resides in the cytoplasm. Required for formate dehydrogenase (FDH) activity. Acts as a sulfur carrier protein that transfers sulfur from IscS to the molybdenum cofactor prior to its insertion into FDH. The chain is Sulfur carrier protein FdhD from Salmonella choleraesuis (strain SC-B67).